We begin with the raw amino-acid sequence, 160 residues long: Snaclec subunit A (160 aa).

A signal peptide spans 1-23 (MGRFILVNLGLLVVAFSLRGSEA). Disulfide bonds link C25-C36, C53-C150, and C125-C142. A C-type lectin domain is found at 32 to 151 (YDKYCYKVFD…CDFTLPFICK (120 aa)).

This sequence belongs to the snaclec family. Heterodimer of subunits A and B; disulfide-linked. As to expression, expressed by the venom gland.

The protein localises to the secreted. Interferes with one step of hemostasis (modulation of platelet aggregation, or coagulation cascade, for example). The polypeptide is Snaclec subunit A (Philodryas olfersii (Green snake)).